Reading from the N-terminus, the 288-residue chain is Rhythmically expressed gene 5 protein (288 aa).

In terms of tissue distribution, expressed in head, but not in the body. Expression levels oscillate with the circadian rhythm.

In terms of biological role, involved in the generation of biological rhythms (Potential). In the head, oscillates in abundance with a daily peak during early night, even under constant darkness. Oscillation is dependent on period (per) function. The polypeptide is Rhythmically expressed gene 5 protein (Reg-5) (Drosophila melanogaster (Fruit fly)).